Consider the following 436-residue polypeptide: GTPase Obg (436 aa).

Residues 2 to 160 (SMFLDTAKIK…RELQLELKIL (159 aa)) form the Obg domain. Residues 161–338 (ADVGLVGFPS…LLDATAELLD (178 aa)) form the OBG-type G domain. GTP-binding positions include 167-174 (GFPSVGKS), 192-196 (FTTIV), 214-217 (DLPG), 284-287 (NKMD), and 319-321 (SGL). Mg(2+) contacts are provided by serine 174 and threonine 194. The OCT domain maps to 358–436 (GFDEEEKAFE…IGKFEFEFVD (79 aa)).

Belongs to the TRAFAC class OBG-HflX-like GTPase superfamily. OBG GTPase family. As to quaternary structure, monomer. Requires Mg(2+) as cofactor.

Its subcellular location is the cytoplasm. An essential GTPase which binds GTP, GDP and possibly (p)ppGpp with moderate affinity, with high nucleotide exchange rates and a fairly low GTP hydrolysis rate. Plays a role in control of the cell cycle, stress response, ribosome biogenesis and in those bacteria that undergo differentiation, in morphogenesis control. This is GTPase Obg from Streptococcus pneumoniae serotype 2 (strain D39 / NCTC 7466).